Consider the following 93-residue polypeptide: Small ribosomal subunit protein uS19 (93 aa).

Belongs to the universal ribosomal protein uS19 family.

Functionally, protein S19 forms a complex with S13 that binds strongly to the 16S ribosomal RNA. This is Small ribosomal subunit protein uS19 from Lactobacillus helveticus (strain DPC 4571).